The chain runs to 246 residues: Large ribosomal subunit protein uL4 (246 aa).

A disordered region spans residues 37-103 (AAQANRKQDY…TEKDRSLDLN (67 aa)). Positions 92 to 103 (PKTEKDRSLDLN) are enriched in basic and acidic residues.

This sequence belongs to the universal ribosomal protein uL4 family. Part of the 50S ribosomal subunit. Interacts weakly with proteins L18e, L24 and L37e. Has been cross-linked to L18e.

Its function is as follows. One of the primary rRNA binding proteins, this protein initially binds near the 5'-end of the 23S rRNA. It is important during the early stages of 50S assembly. Functionally, makes multiple contacts with different domains of the 23S rRNA in the assembled 50S subunit. Forms part of the polypeptide exit tunnel, in which it helps forms a bend with protein L22. Contacts the macrolide antibiotic spiramycin in the polypeptide exit tunnel. This Haloarcula marismortui (strain ATCC 43049 / DSM 3752 / JCM 8966 / VKM B-1809) (Halobacterium marismortui) protein is Large ribosomal subunit protein uL4 (rpl4).